A 214-amino-acid chain; its full sequence is Glycerol-3-phosphate acyltransferase (214 aa).

The next 5 membrane-spanning stretches (helical) occupy residues 8-28 (LILA…QIFF), 70-90 (LLPL…LIAV), 111-131 (AGVV…IFIV), 144-164 (IVVA…GIIL), and 165-185 (PSYD…ILIR).

Belongs to the PlsY family. In terms of assembly, probably interacts with PlsX.

It localises to the cell membrane. It carries out the reaction an acyl phosphate + sn-glycerol 3-phosphate = a 1-acyl-sn-glycero-3-phosphate + phosphate. Its pathway is lipid metabolism; phospholipid metabolism. Functionally, catalyzes the transfer of an acyl group from acyl-phosphate (acyl-PO(4)) to glycerol-3-phosphate (G3P) to form lysophosphatidic acid (LPA). This enzyme utilizes acyl-phosphate as fatty acyl donor, but not acyl-CoA or acyl-ACP. The protein is Glycerol-3-phosphate acyltransferase of Streptococcus gordonii (strain Challis / ATCC 35105 / BCRC 15272 / CH1 / DL1 / V288).